The primary structure comprises 945 residues: Netrin receptor UNC5B (945 aa).

A signal peptide spans 1–26; it reads MRARSGVRSALLLALLLCWDPTPSLA. Residues 27–377 are Extracellular-facing; that stretch reads GVDSAGQVLP…LETSGDVALY (351 aa). The Ig-like domain maps to 48 to 145; sequence PYFLLEPQDA…SGTTKSRRAY (98 aa). 9 cysteine pairs are disulfide-bonded: Cys69/Cys130, Cys81/Cys128, Cys174/Cys225, Cys258/Cys295, Cys262/Cys299, Cys273/Cys285, Cys314/Cys348, Cys318/Cys353, and Cys326/Cys338. In terms of domain architecture, Ig-like C2-type spans 153 to 242; the sequence is KNFDQEPLAK…KRRSTTATVI (90 aa). Asn222 is a glycosylation site (N-linked (GlcNAc...) asparagine). 2 consecutive TSP type-1 domains span residues 246–300 and 302–354; these read NGGW…TVCP and DGAW…GLCV. N-linked (GlcNAc...) asparagine glycosylation is present at Asn347. The helical transmembrane segment at 378–398 threads the bilayer; that stretch reads AGLVVAVFVVVAVLMAVGVIV. Residues 399-945 lie on the Cytoplasmic side of the membrane; it reads YRRNCRDFDT…LVAMATDGDC (547 aa). Cys403 is lipidated: S-palmitoyl cysteine. The region spanning 543–686 is the ZU5 domain; it reads SSVSGTFGCL…LGTYVFMGES (144 aa). Residue Tyr581 is modified to Phosphotyrosine. Residues 689 to 838 are UPA domain; sequence RSAVKRLQLA…AETPAGSLDA (150 aa). The interaction with DCC stretch occupies residues 707-725; sequence SLEYSLRVYCLEDTPVALK. The Death domain occupies 865-943; that stretch reads KICSSLDAPN…EMLVAMATDG (79 aa).

It belongs to the unc-5 family. In terms of assembly, interacts with the cytoplasmic part of DCC. Interacts with GNAI2 via its cytoplasmic part. Interacts (via death domain) with DAPK1 (via death domain). Interacts (via extracellular domain) with FLRT2 and FLRT3 (via extracellular domain), but has higher affinity for FLRT3. Identified in a complex with FLRT3 and ADGRL3; does not interact with ADGRL3 by itself. In terms of processing, phosphorylated on cytoplasmic tyrosine residues. Palmitoylation is required for pro-apoptotic activity, but not for location at lipid rafts. Post-translationally, proteolytically cleaved by caspases during apoptosis. The cleavage does not take place when the receptor is associated with netrin ligand. Its cleavage by caspases is required to induce apoptosis. In terms of tissue distribution, highly expressed in brain. Expressed in lung during late development. Expressed during early blood vessel formation, in the semicircular canal and in a dorsal to ventral gradient in the retina.

Its subcellular location is the cell membrane. The protein resides in the membrane raft. Its function is as follows. Receptor for netrin required for axon guidance. Mediates axon repulsion of neuronal growth cones in the developing nervous system upon ligand binding. Axon repulsion in growth cones may be caused by its association with DCC that may trigger signaling for repulsion. Functions as a netrin receptor that negatively regulates vascular branching during angiogenesis. Mediates retraction of tip cell filopodia on endothelial growth cones in response to netrin. It also acts as a dependence receptor required for apoptosis induction when not associated with netrin ligand. Mediates apoptosis by activating DAPK1. In the absence of NTN1, activates DAPK1 by reducing its autoinhibitory phosphorylation at Ser-308 thereby increasing its catalytic activity. The sequence is that of Netrin receptor UNC5B (Unc5b) from Mus musculus (Mouse).